Reading from the N-terminus, the 498-residue chain is ADP,ATP carrier protein 1 (498 aa).

At 1–33 (MNNPKNDNYLSELSKVIWPIERYENKKFLPMAF) the chain is on the cytoplasmic side. A helical membrane pass occupies residues 34 to 54 (MMFCILLNYSTLRSIKDGFVV). A disulfide bond links cysteine 37 and cysteine 85. Residues 55–67 (TDIGAEAISFLKT) are Extracellular-facing. A helical transmembrane segment spans residues 68–88 (YIVLPSAVIAMVIYVKLCDIL). Residues 89 to 92 (KQEN) lie on the Cytoplasmic side of the membrane. A helical membrane pass occupies residues 93–113 (VFYVITSFFLGYFALFAFVLY). Over 114–147 (PYPDLVHPDPETIESWSVAYPNVKWFIRIVGKWS) the chain is Extracellular. The chain crosses the membrane as a helical span at residues 148–168 (FASFYTMAELWGTMMLSLLFW). The Cytoplasmic portion of the chain corresponds to 169–184 (QFANQITKTDEAKRFY). The chain crosses the membrane as a helical span at residues 185 to 205 (SMFGLLANLALPVTSVIIGYC). Residues 206–218 (LHEKTQIVAEHLK) lie on the Extracellular side of the membrane. The chain crosses the membrane as a helical span at residues 219 to 239 (FVPLFVIMITSSFLVILTYRW). The Cytoplasmic segment spans residues 240–279 (MNKNVLTDPRLYDPALVKEKKAKAKMSLIDSFKMIFTSKY). The helical transmembrane segment at 280–300 (VGYIALLLIAYGVSVNLVEGV) threads the bilayer. Residues 301–320 (WKSKVKELYPTKEAYTIYMG) are Extracellular-facing. The chain crosses the membrane as a helical span at residues 321–341 (KFQFYQGWVAIAFMLIGSNIL). The Cytoplasmic segment spans residues 342 to 348 (RKVSWLT). Residues 349-369 (AAMITPLMMLITGAAFFAFIF) form a helical membrane-spanning segment. The Extracellular portion of the chain corresponds to 370–379 (FDSVIAMHLT). Residues 380–400 (GILASGPLALAVMIGMIQNVL) traverse the membrane as a helical segment. Residues 401 to 438 (SKGVKYSLFDATKNMAYIPLDKDLRVKGQAAVEVIGGR) are Cytoplasmic-facing. 436 to 442 (GGRFGKS) provides a ligand contact to ATP. Residues 439-459 (FGKSGGAIIQSTFFILFPAFG) form a helical membrane-spanning segment. Residues 460–465 (FVEATP) are Extracellular-facing. A helical transmembrane segment spans residues 466-486 (YFASIFFVIVILWIYAVKGLN). The Cytoplasmic segment spans residues 487-498 (KEYKVLVNKTEK).

The protein belongs to the ADP/ATP translocase tlc family.

It localises to the cell membrane. Its function is as follows. Provides the rickettsial cell with host ATP in exchange for rickettsial ADP. This is an obligate exchange system. This energy acquiring activity is an important component of rickettsial parasitism. The polypeptide is ADP,ATP carrier protein 1 (tlcA) (Rickettsia conorii (strain ATCC VR-613 / Malish 7)).